Consider the following 320-residue polypeptide: MSRAEFSYDFPHRHLLSVADLNPVDIQIIFERAAHHLATNRTPDKRSDVLRGLTVLNLFFEASTRTQGSFEMAGKRLGADVVNFAVAHSSASKGESLSDTARTLAAMKPDIMVVRHSATGAPQFLADHTGLAVVNAGDGMHEHPTQALLDSFTLSQHWGSVGGRRILIVGDILHSRVARSNIGLLNILGAEIRLCAPPTLLPSDVDQWGCDVFHDLDEALKGCDAVMALRQQRERMSGGFVPSEREFFHLFGLTHERLEVASPDVLVMHPGPMNRGVEIHTKLADDPERSVILEQVESGVAVRMAILELIGANIRKEASA.

2 residues coordinate carbamoyl phosphate: Arg-65 and Thr-66. Residue Lys-93 participates in L-aspartate binding. Carbamoyl phosphate-binding residues include Arg-115, His-143, and Gln-146. Residues Arg-176 and Arg-230 each contribute to the L-aspartate site. Gly-271 and Pro-272 together coordinate carbamoyl phosphate.

It belongs to the aspartate/ornithine carbamoyltransferase superfamily. ATCase family. Heterododecamer (2C3:3R2) of six catalytic PyrB chains organized as two trimers (C3), and six regulatory PyrI chains organized as three dimers (R2).

It catalyses the reaction carbamoyl phosphate + L-aspartate = N-carbamoyl-L-aspartate + phosphate + H(+). It functions in the pathway pyrimidine metabolism; UMP biosynthesis via de novo pathway; (S)-dihydroorotate from bicarbonate: step 2/3. Catalyzes the condensation of carbamoyl phosphate and aspartate to form carbamoyl aspartate and inorganic phosphate, the committed step in the de novo pyrimidine nucleotide biosynthesis pathway. This chain is Aspartate carbamoyltransferase catalytic subunit, found in Maricaulis maris (strain MCS10) (Caulobacter maris).